The primary structure comprises 252 residues: Imidazole glycerol phosphate synthase subunit HisF (252 aa).

Active-site residues include aspartate 11 and aspartate 130.

The protein belongs to the HisA/HisF family. In terms of assembly, heterodimer of HisH and HisF.

Its subcellular location is the cytoplasm. It carries out the reaction 5-[(5-phospho-1-deoxy-D-ribulos-1-ylimino)methylamino]-1-(5-phospho-beta-D-ribosyl)imidazole-4-carboxamide + L-glutamine = D-erythro-1-(imidazol-4-yl)glycerol 3-phosphate + 5-amino-1-(5-phospho-beta-D-ribosyl)imidazole-4-carboxamide + L-glutamate + H(+). It participates in amino-acid biosynthesis; L-histidine biosynthesis; L-histidine from 5-phospho-alpha-D-ribose 1-diphosphate: step 5/9. IGPS catalyzes the conversion of PRFAR and glutamine to IGP, AICAR and glutamate. The HisF subunit catalyzes the cyclization activity that produces IGP and AICAR from PRFAR using the ammonia provided by the HisH subunit. This is Imidazole glycerol phosphate synthase subunit HisF from Thermococcus onnurineus (strain NA1).